A 725-amino-acid chain; its full sequence is ATP-dependent zinc metalloprotease FtsH (725 aa).

Topologically, residues 1–11 (MDKMKKPKINW) are cytoplasmic. The chain crosses the membrane as a helical span at residues 12-32 (LLIVIVGIIAALLITVLVLLF). At 33-160 (SPKTQPKSFD…LFGQHIVQEN (128 aa)) the chain is on the extracellular side. The helical transmembrane segment at 161-181 (GFITFIKAIWFPALIAIIIFL) threads the bilayer. Residues 182-725 (GYKAQSRAAS…EEETLAEKAE (544 aa)) are Cytoplasmic-facing. An ATP-binding site is contributed by 252 to 259 (GPPGTGKT). His474 lines the Zn(2+) pocket. Glu475 is an active-site residue. Residues His478 and Asp552 each coordinate Zn(2+). The segment at 680 to 725 (QVNESQEKDKQKNAQIKEDLSKMDKKDNLTKAKDKGEEETLAEKAE) is disordered. Basic and acidic residues predominate over residues 684–725 (SQEKDKQKNAQIKEDLSKMDKKDNLTKAKDKGEEETLAEKAE).

It in the central section; belongs to the AAA ATPase family. This sequence in the C-terminal section; belongs to the peptidase M41 family. Homohexamer. The cofactor is Zn(2+).

The protein localises to the cell membrane. Acts as a processive, ATP-dependent zinc metallopeptidase for both cytoplasmic and membrane proteins. Plays a role in the quality control of integral membrane proteins. The polypeptide is ATP-dependent zinc metalloprotease FtsH (Mycoplasmopsis pulmonis (strain UAB CTIP) (Mycoplasma pulmonis)).